Reading from the N-terminus, the 942-residue chain is UvrABC system protein A (942 aa).

Residue 32–39 coordinates ATP; sequence GLSGSGKS. The C4-type zinc-finger motif lies at 251 to 278; it reads CPVCGFTVPELEPRLFSFNAPFGSCPTC. ABC transporter domains follow at residues 308-589 and 609-937; these read WNPI…KKSI and GNGR…HYLK. Position 641–648 (641–648) interacts with ATP; the sequence is GVSGSGKS. Residues 740 to 766 form a C4-type zinc finger; sequence CEACSGDGIIKIEMHFLPDVYVPCEVC.

Belongs to the ABC transporter superfamily. UvrA family. In terms of assembly, forms a heterotetramer with UvrB during the search for lesions.

It is found in the cytoplasm. In terms of biological role, the UvrABC repair system catalyzes the recognition and processing of DNA lesions. UvrA is an ATPase and a DNA-binding protein. A damage recognition complex composed of 2 UvrA and 2 UvrB subunits scans DNA for abnormalities. When the presence of a lesion has been verified by UvrB, the UvrA molecules dissociate. The chain is UvrABC system protein A from Streptococcus pyogenes serotype M1.